The primary structure comprises 324 residues: UDP-N-acetylenolpyruvoylglucosamine reductase (324 aa).

The FAD-binding PCMH-type domain occupies 38 to 217; it reads AGGLAELMFQ…IRAEMDAVRQ (180 aa). R183 is an active-site residue. Catalysis depends on S232, which acts as the Proton donor. Residue E302 is part of the active site.

The protein belongs to the MurB family. Requires FAD as cofactor.

Its subcellular location is the cytoplasm. It catalyses the reaction UDP-N-acetyl-alpha-D-muramate + NADP(+) = UDP-N-acetyl-3-O-(1-carboxyvinyl)-alpha-D-glucosamine + NADPH + H(+). It functions in the pathway cell wall biogenesis; peptidoglycan biosynthesis. In terms of biological role, cell wall formation. In Allorhizobium ampelinum (strain ATCC BAA-846 / DSM 112012 / S4) (Agrobacterium vitis (strain S4)), this protein is UDP-N-acetylenolpyruvoylglucosamine reductase.